Consider the following 162-residue polypeptide: Ribosome maturation factor RimM (162 aa).

One can recognise a PRC barrel domain in the interval 86–160 (EGRYYYFALI…GIHVDPIPGL (75 aa)).

It belongs to the RimM family. In terms of assembly, binds ribosomal protein uS19.

Its subcellular location is the cytoplasm. An accessory protein needed during the final step in the assembly of 30S ribosomal subunit, possibly for assembly of the head region. Essential for efficient processing of 16S rRNA. May be needed both before and after RbfA during the maturation of 16S rRNA. It has affinity for free ribosomal 30S subunits but not for 70S ribosomes. The sequence is that of Ribosome maturation factor RimM from Thermus thermophilus (strain ATCC BAA-163 / DSM 7039 / HB27).